Consider the following 139-residue polypeptide: Putative pre-16S rRNA nuclease (139 aa).

Belongs to the YqgF nuclease family.

It is found in the cytoplasm. In terms of biological role, could be a nuclease involved in processing of the 5'-end of pre-16S rRNA. The chain is Putative pre-16S rRNA nuclease from Legionella pneumophila (strain Lens).